The following is an 89-amino-acid chain: Small ribosomal subunit protein uS15 (89 aa).

It belongs to the universal ribosomal protein uS15 family. As to quaternary structure, part of the 30S ribosomal subunit. Forms a bridge to the 50S subunit in the 70S ribosome, contacting the 23S rRNA.

Its function is as follows. One of the primary rRNA binding proteins, it binds directly to 16S rRNA where it helps nucleate assembly of the platform of the 30S subunit by binding and bridging several RNA helices of the 16S rRNA. Forms an intersubunit bridge (bridge B4) with the 23S rRNA of the 50S subunit in the ribosome. This is Small ribosomal subunit protein uS15 from Protochlamydia amoebophila (strain UWE25).